Reading from the N-terminus, the 582-residue chain is MTQNKQGVVQSIAGPAVIADGMYGAKMYDIVRVGRERLVGEIIRLDGNTAFVQVYEDTSGLTVGEPVETTNLPLSVELGPGMLNGIYDGIQRPLDKIREASGDFIARGIEVSSLDRTKKWAFTPSVQPGDTVVGSGILGTVPEFSFTHKILTPPDKGGKLRWVAAAGEYTIDDTIAELEDGTKLRLAHYWPVRAPRPVQKKLDPSLPFLTGMRILDVLFPLVMGGAAAIPGPFGSGKTVTQQSVAKYGNADIVVYVGCGERGNEMTDVLVEFPELVDPKTGGPLMHRTILIANTSNMPVAAREASVYTGITLAEYFRDQGYSVSLMADSTSRWAEALREISSRLEEMPAEEGYPPYLGAKLAAFYERAGAVKTLSGDDGAVSVIGAVSPAGGDMSEPVTQATLRITGAFWRLDAGLARRRHFPAINWNGSYSLFTPILDKWYRQNVGPDFPELRQRITNLLQQEAALQEVVQLVGPDALQDNERLIIETGRMLRQDFLQQNGFDPVDASASMPKNYGLMKMFLKFYDEADLALKNGSTIDEIIQNPVIEKLARARYTPENEFAAYGEGVMDQLSTTFKGVKA.

231 to 238 (GPFGSGKT) serves as a coordination point for ATP.

The protein belongs to the ATPase alpha/beta chains family.

The enzyme catalyses ATP + H2O + 4 H(+)(in) = ADP + phosphate + 5 H(+)(out). Its function is as follows. Produces ATP from ADP in the presence of a proton gradient across the membrane. The V-type alpha chain is a catalytic subunit. The polypeptide is V-type ATP synthase alpha chain (Deinococcus deserti (strain DSM 17065 / CIP 109153 / LMG 22923 / VCD115)).